The chain runs to 461 residues: MSISSSVAVLNVVQVSPPTAPVNNAFQDRISLTHFDLLALRAPPNQRLFFYETHLPISAFAETVIPKLRDSLSLTLQNFRPLAGTLIWSLHSDEPYIRIKDDDSVPLTIAETDADPQKLFDDPFQQETDLQQLLPPLRVSETEASLLALQITLFPSGDICLGITFHHAAQDGASLALFLKSWAHICRHGDDPPLPQNLIPIFDRDFIDDPKNIKQLFLDHLLTPLTPGGPRNRSVKPMEKPFNDRMHGSFRLTVDDIENLRRRITSLQVQNTSQEPPVRMSTVVVTCAYVLTCFVKAGLTKKHVRFILPADLRKRLQPPVPDNYYGNCVFGCTVDMSSDDLAGQDGLVVAAKTISSVVSELDANDHRTFFENFLLNNTISQEETKVGVGGSIYFSLDEKDFGWGGPKHLKNVPPWPNHIYLAERRDGDKGVDFCLMLAKQEMAEFESKFLDDLKLLEKRSC.

The Proton acceptor role is filled by H167. Positions 167-171 match the HXXXD motif motif; the sequence is HAAQD. Position 281–282 (281–282) interacts with malonyl-CoA; sequence ST. The Proton acceptor role is filled by D400. A DFGWG motif motif is present at residues 400-404; sequence DFGWG.

The protein belongs to the plant acyltransferase family. Phenolic glucoside malonyltransferase subfamily. In terms of tissue distribution, expressed in all tissues. Most highly expressed in the abdomen and especially in the gut.

The catalysed reaction is a flavonol 3-O-beta-D-glucoside + malonyl-CoA = a flavonol 3-O-(6-O-malonyl-beta-D-glucoside) + CoA. It carries out the reaction kaempferol 3-O-beta-D-glucoside + malonyl-CoA = kaempferol 3-O-(6-O-malonyl-beta-D-glucoside) + CoA. The enzyme catalyses quercetin 3-O-beta-D-glucoside + malonyl-CoA = quercetin 3-O-(6-O-malonyl-beta-D-glucoside) + CoA. It catalyses the reaction a flavonol 7-O-beta-D-glucoside + malonyl-CoA = a flavonol 7-O-(6-O-malonyl-beta-D-glucoside) + CoA. The catalysed reaction is (2S)-naringenin 7-O-beta-D-glucoside + malonyl-CoA = (2S)-naringenin 7-O-(6-O-malonyl-beta-D-glucoside) + CoA. It carries out the reaction kaempferol 7-O-beta-D-glucoside + malonyl-CoA = kaempferol 7-O-(6-O-malonyl-beta-D-glucoside) + CoA. The enzyme catalyses apigenin 7-O-beta-D-glucoside + malonyl-CoA = apigenin 7-O-(6-O-malonyl-beta-D-glucoside) + CoA. It catalyses the reaction rhaponticin + malonyl-CoA = 6-O-malonyl-rhaponticin + CoA. Its function is as follows. Phenolic glucoside malonyltransferase that neutralizes phenolic glycosides in host plants. Catalyzes the transfer of a malonyl group from malonyl-CoA to the phenolic glycosides, leading to their detoxification. Phenolic glycosides, which are among the most abundant plant secondary metabolites, act as plant defense compounds: they strongly affect growth, development and behavior of insect herbivores. Has malonyltransferase activity against flavonoids kaempferol 3-O-glucoside, kaempferol 7-O-glucoside, isoquercetin (quercetin 3-O-beta-D-glucopyranoside), apigetrin (apigenin 7-O-beta-D-glucoside) and prunin (naringenin 7-O-beta-D-glucoside). Also has activity toward non-flavonoid rhaponticin, but with lower efficiency. In Bemisia tabaci (Sweetpotato whitefly), this protein is Phenolic glucoside malonyltransferase 1.